We begin with the raw amino-acid sequence, 486 residues long: Argininosuccinate lyase (486 aa).

The protein belongs to the lyase 1 family. Argininosuccinate lyase subfamily.

The protein resides in the cytoplasm. The catalysed reaction is 2-(N(omega)-L-arginino)succinate = fumarate + L-arginine. Its pathway is amino-acid biosynthesis; L-arginine biosynthesis; L-arginine from L-ornithine and carbamoyl phosphate: step 3/3. This chain is Argininosuccinate lyase, found in Acidobacterium capsulatum (strain ATCC 51196 / DSM 11244 / BCRC 80197 / JCM 7670 / NBRC 15755 / NCIMB 13165 / 161).